A 128-amino-acid chain; its full sequence is L-ectoine synthase (128 aa).

Belongs to the ectoine synthase family.

It catalyses the reaction (2S)-4-acetamido-2-aminobutanoate = L-ectoine + H2O. The protein operates within amine and polyamine biosynthesis; ectoine biosynthesis; L-ectoine from L-aspartate 4-semialdehyde: step 3/3. In terms of biological role, catalyzes the circularization of gamma-N-acetyl-alpha,gamma-diaminobutyric acid (ADABA) to ectoine (1,4,5,6-tetrahydro-2-methyl-4-pyrimidine carboxylic acid), which is an excellent osmoprotectant. This is L-ectoine synthase from Aliivibrio fischeri (strain ATCC 700601 / ES114) (Vibrio fischeri).